The sequence spans 296 residues: Thioredoxin-related transmembrane protein 2 (296 aa).

An N-terminal signal peptide occupies residues 1–48 (MAVLAPLIALVYSVPRLSRWLAQPYYLLSALLSAAFLLVRKLPPLCHG). Over 49-102 (LPTQREDGNPCDFDWREVEILMFLSAIVMMKNRRSITVEQHIGNIFMFSKVANA) the chain is Extracellular. Residues 103-125 (ILFFRLDIRMGLLYITLCIVFLM) traverse the membrane as a helical segment. The 157-residue stretch at 114–270 (LLYITLCIVF…YQRAKKPSKA (157 aa)) folds into the Thioredoxin domain. Over 126 to 296 (TCEPPLYMGP…VSDGENKKDK (171 aa)) the chain is Cytoplasmic. Ser-211, Ser-243, and Ser-288 each carry phosphoserine. A disordered region spans residues 266–296 (KPSKAGDSIPEEQPVASAPTTVSDGENKKDK). Positions 293 to 296 (KKDK) match the Di-lysine motif motif.

In terms of assembly, monomer. Homodimer; disulfide-linked. Occurs in both reduced and oxidized monomeric form. Oxidative conditions increase homodimerization. Interacts with CANX. Interacts with ATP2A2.

The protein localises to the endoplasmic reticulum membrane. The protein resides in the mitochondrion membrane. In terms of biological role, endoplasmic reticulum and mitochondria-associated protein that probably functions as a regulator of cellular redox state and thereby regulates protein post-translational modification, protein folding and mitochondrial activity. Indirectly regulates neuronal proliferation, migration, and organization in the developing brain. The protein is Thioredoxin-related transmembrane protein 2 (TMX2) of Pongo abelii (Sumatran orangutan).